A 197-amino-acid polypeptide reads, in one-letter code: Xanthine phosphoribosyltransferase (197 aa).

2 residues coordinate xanthine: leucine 20 and asparagine 27. 128-132 (ANGQA) lines the 5-phospho-alpha-D-ribose 1-diphosphate pocket. Lysine 156 provides a ligand contact to xanthine.

It belongs to the purine/pyrimidine phosphoribosyltransferase family. Xpt subfamily. Homodimer.

The protein resides in the cytoplasm. It catalyses the reaction XMP + diphosphate = xanthine + 5-phospho-alpha-D-ribose 1-diphosphate. It functions in the pathway purine metabolism; XMP biosynthesis via salvage pathway; XMP from xanthine: step 1/1. In terms of biological role, converts the preformed base xanthine, a product of nucleic acid breakdown, to xanthosine 5'-monophosphate (XMP), so it can be reused for RNA or DNA synthesis. In Bacillus cereus (strain ATCC 10987 / NRS 248), this protein is Xanthine phosphoribosyltransferase.